The sequence spans 844 residues: NADPH-Fe(3+) oxidoreductase subunit alpha (844 aa).

One can recognise a 2Fe-2S ferredoxin-type domain in the interval 1-78; that stretch reads MVSLTIDGKD…GIKVTTQSEK (78 aa). [2Fe-2S] cluster-binding residues include cysteine 34, cysteine 45, cysteine 48, and cysteine 62. In terms of domain architecture, 4Fe-4S His(Cys)3-ligated-type spans 78–117; the sequence is KLSRIRQKIMELMLVNHPLDCPVCDAGGECDLQNACYGLG. Histidine 94, cysteine 98, cysteine 101, cysteine 107, cysteine 146, cysteine 149, cysteine 152, cysteine 186, cysteine 189, cysteine 192, cysteine 196, cysteine 222, cysteine 225, cysteine 229, and cysteine 256 together coordinate [4Fe-4S] cluster. 2 4Fe-4S ferredoxin-type domains span residues 137–168 and 177–206; these read PLIE…IRVV and DTVD…SKPF. Residues 215 to 270 enclose the 4Fe-4S Mo/W bis-MGD-type domain; sequence FTTTPSVCPFCATGCQIEYHSRNGRVERVTSDDSTYNSGNLCINGRFGYSYINSPD.

Heterotetramer with 2 beta subunits. It depends on [4Fe-4S] cluster as a cofactor.

Its subcellular location is the cell inner membrane. With respect to regulation, not regulated by FAD or FMN. Functionally, the SfrAB enzymatic complex is probably involved in acetate metabolism and does not participate directly in the reduction of Fe(3+) chelates. May serve as a major route for NADP regeneration. In Geobacter sulfurreducens (strain DL-1 / KN400), this protein is NADPH-Fe(3+) oxidoreductase subunit alpha (sfrA).